The chain runs to 247 residues: Adenylate kinase (247 aa).

Residue 42 to 47 participates in ATP binding; the sequence is GAGKGT. An NMP region spans residues 62–91; it reads ATGDMLRAQVTAKTELGVQAKKIMDQGGLV. AMP is bound by residues Thr63, Arg68, 89–91, 118–121, and Gln125; these read GLV and GFPR. The interval 159–196 is LID; that stretch reads GRLVHPASGRSYHKLFNPPKKEMTDDQTGEPLVQRSDD. ATP is bound by residues Arg160 and 169–170; that span reads SY. The interval 169–191 is disordered; the sequence is SYHKLFNPPKKEMTDDQTGEPLV. AMP is bound by residues Arg193 and Arg204. ATP is bound at residue Gln232.

Belongs to the adenylate kinase family. AK2 subfamily. As to quaternary structure, monomer.

The protein localises to the cytoplasm. It localises to the cytosol. The protein resides in the mitochondrion intermembrane space. It catalyses the reaction AMP + ATP = 2 ADP. Its function is as follows. Catalyzes the reversible transfer of the terminal phosphate group between ATP and AMP. Plays an important role in cellular energy homeostasis and in adenine nucleotide metabolism. Adenylate kinase activity is critical for regulation of the phosphate utilization and the AMP de novo biosynthesis pathways. This is Adenylate kinase from Meyerozyma guilliermondii (strain ATCC 6260 / CBS 566 / DSM 6381 / JCM 1539 / NBRC 10279 / NRRL Y-324) (Yeast).